Reading from the N-terminus, the 111-residue chain is MTQLENKHCVPCEGTAAPMASEELQRQLSSLPEWTLVDDSGTSKLVRVFTFKDFQSALDFTNRVGQLAEAEGHHPALLTEWGKVTVSWWTHAIGGIHLNDVIMATKTEKLV.

Belongs to the pterin-4-alpha-carbinolamine dehydratase family.

The enzyme catalyses (4aS,6R)-4a-hydroxy-L-erythro-5,6,7,8-tetrahydrobiopterin = (6R)-L-erythro-6,7-dihydrobiopterin + H2O. The chain is Putative pterin-4-alpha-carbinolamine dehydratase from Chlorobaculum tepidum (strain ATCC 49652 / DSM 12025 / NBRC 103806 / TLS) (Chlorobium tepidum).